The sequence spans 506 residues: Maturase K (506 aa).

This sequence belongs to the intron maturase 2 family. MatK subfamily.

It is found in the plastid. The protein localises to the chloroplast. Its function is as follows. Usually encoded in the trnK tRNA gene intron. Probably assists in splicing its own and other chloroplast group II introns. The protein is Maturase K of Medicago truncatula (Barrel medic).